Here is a 423-residue protein sequence, read N- to C-terminus: Histidine--tRNA ligase 2 (423 aa).

This sequence belongs to the class-II aminoacyl-tRNA synthetase family. As to quaternary structure, homodimer.

It localises to the cytoplasm. It catalyses the reaction tRNA(His) + L-histidine + ATP = L-histidyl-tRNA(His) + AMP + diphosphate + H(+). This chain is Histidine--tRNA ligase 2, found in Bacillus anthracis.